The chain runs to 200 residues: Mediator of RNA polymerase II transcription subunit 22 (200 aa).

Residues 93–122 are a coiled coil; that stretch reads SVNEAIDQRNQQLRALQEECDRKLITLRDE. The tract at residues 167 to 200 is disordered; that stretch reads SAPLLASPETGAGPLQSAAPVHSHGGGPGPTEHT. Residues 190-200 are compositionally biased toward gly residues; sequence HGGGPGPTEHT.

Belongs to the Mediator complex subunit 22 family. In terms of assembly, component of the Mediator complex, which is composed of MED1, MED4, MED6, MED7, MED8, MED9, MED10, MED11, MED12, MED13, MED13L, MED14, MED15, MED16, MED17, MED18, MED19, MED20, MED21, MED22, MED23, MED24, MED25, MED26, MED27, MED29, MED30, MED31, CCNC, CDK8 and CDC2L6/CDK11. The MED12, MED13, CCNC and CDK8 subunits form a distinct module termed the CDK8 module. Mediator containing the CDK8 module is less active than Mediator lacking this module in supporting transcriptional activation. Individual preparations of the Mediator complex lacking one or more distinct subunits have been variously termed ARC, CRSP, DRIP, PC2, SMCC and TRAP.

The protein resides in the nucleus. Functionally, component of the Mediator complex, a coactivator involved in the regulated transcription of nearly all RNA polymerase II-dependent genes. Mediator functions as a bridge to convey information from gene-specific regulatory proteins to the basal RNA polymerase II transcription machinery. Mediator is recruited to promoters by direct interactions with regulatory proteins and serves as a scaffold for the assembly of a functional preinitiation complex with RNA polymerase II and the general transcription factors. The chain is Mediator of RNA polymerase II transcription subunit 22 (Med22) from Rattus norvegicus (Rat).